The following is a 1105-amino-acid chain: Tubulin-folding cofactor D (1105 aa).

N-linked (GlcNAc...) asparagine glycans are attached at residues asparagine 122 and asparagine 126. HEAT repeat units follow at residues 308 to 345 (IYLEVIVDFLLSSVSDIDSFVRWSAAKGLAKIISRLPW), 347 to 385 (LAEQVIDAIIELMTENMFLNPIENTVNISITSPLVWHGA), 401 to 446 (SKCL…CYSK), and 452 to 489 (LQTNLILCLLQTVLFDNEINVRRAATAALFEVIGRHAS). Residue asparagine 373 is glycosylated (N-linked (GlcNAc...) asparagine). N-linked (GlcNAc...) asparagine glycosylation is found at asparagine 721, asparagine 883, and asparagine 1083.

As to quaternary structure, interacts with alp21.

It localises to the cytoplasm. The protein localises to the cytoskeleton. Has a function in the folding of beta-tubulin. Microtubule-associated protein that is essential to direct polarized cell growth and to position the nucleus and septum to the center of the cell during mitosis. This Schizosaccharomyces pombe (strain 972 / ATCC 24843) (Fission yeast) protein is Tubulin-folding cofactor D (alp1).